The chain runs to 75 residues: Brevinin-2HS2A (75 aa).

Positions 1 to 22 are cleaved as a signal peptide; sequence MFTLKKPLLLLFFLGTISLSLC. Residues 23 to 40 constitute a propeptide that is removed on maturation; it reads QEERDADEEEGEMIEEEV. Cysteines 69 and 75 form a disulfide.

Belongs to the frog skin active peptide (FSAP) family. Brevinin subfamily. As to expression, expressed by the skin glands.

The protein localises to the secreted. Has antimicrobial activity against some Gram-positive bacteria and fungi but has no activity against a range of Gram-negative bacteria except P.faecalis. Has antimicrobial activity against the Gram-positive bacteria S.aureus ATCC 25923 (MIC=19 uM), B.licheniformis X39 (MIC=37.5 uM) and R.rhodochrous X15 (MIC=9.5 uM), is virtually inactive against E.faecium 091299 (MIC=150 uM) and S.carnosus KHS (MIC=150 uM) and inactive against E.faecalis 981. Active against the Gram-negative bacterium P.faecalis X29 (MIC=9.5 uM) and is inactive against E.coli, P.aeruginosa and S.typhi. Active against C.albicans ATCC 2002 (MIC=19 uM) and is also active against the slime mold 090223 (MIC=37.5 uM). Has extremely low hemolytic activity against human erythrocytes (LC(50)=300 uM). This Odorrana hainanensis (Odor frog) protein is Brevinin-2HS2A.